Reading from the N-terminus, the 151-residue chain is RNA polymerase-binding transcription factor DksA (151 aa).

The Zn(2+) site is built by C114, C117, C135, and C138. The dksA C4-type zinc-finger motif lies at C114–C138.

This sequence belongs to the DksA family. In terms of assembly, interacts directly with the RNA polymerase.

It is found in the cytoplasm. Its function is as follows. Transcription factor that acts by binding directly to the RNA polymerase (RNAP). Required for negative regulation of rRNA expression and positive regulation of several amino acid biosynthesis promoters. Also required for regulation of fis expression. The sequence is that of RNA polymerase-binding transcription factor DksA from Buchnera aphidicola subsp. Acyrthosiphon pisum (strain APS) (Acyrthosiphon pisum symbiotic bacterium).